A 142-amino-acid polypeptide reads, in one-letter code: Small heat shock protein IbpB (142 aa).

Residues 26–137 (TGESQSFPPY…APQRIAISER (112 aa)) enclose the sHSP domain.

The protein belongs to the small heat shock protein (HSP20) family. As to quaternary structure, homodimer. Forms homomultimers of about 100-150 subunits at optimal growth temperatures. Conformation changes to oligomers at high temperatures or high ionic concentrations. The decrease in size of the multimers is accompanied by an increase in chaperone activity.

The protein localises to the cytoplasm. Its function is as follows. Associates with aggregated proteins, together with IbpA, to stabilize and protect them from irreversible denaturation and extensive proteolysis during heat shock and oxidative stress. Aggregated proteins bound to the IbpAB complex are more efficiently refolded and reactivated by the ATP-dependent chaperone systems ClpB and DnaK/DnaJ/GrpE. Its activity is ATP-independent. The polypeptide is Small heat shock protein IbpB (Citrobacter koseri (strain ATCC BAA-895 / CDC 4225-83 / SGSC4696)).